We begin with the raw amino-acid sequence, 777 residues long: DnaJ homolog subfamily C member 16 (777 aa).

An N-terminal signal peptide occupies residues 1–23 (MELGRAGPAGLLLLLLLLLAAQA). Residues 24–531 (APERDPYRVL…DSLFHSNWRE (508 aa)) lie on the Cytoplasmic side of the membrane. The 65-residue stretch at 28 to 92 (DPYRVLGVGR…EKRANFDRYG (65 aa)) folds into the J domain. The Thioredoxin domain occupies 117-243 (FDESFFHFPF…LRQFVENLLP (127 aa)). The helical; Anchor for type IV membrane protein transmembrane segment at 532–552 (MMPLLSLLFSALFILFGTVIV) threads the bilayer. At 553–777 (QAFSDSSDTR…FYIPSWPALD (225 aa)) the chain is on the extracellular side. The segment at 558-589 (SSDTRDSPASEKKDTTAKTEKNDTSFNKESNS) is disordered. Positions 559–580 (SDTRDSPASEKKDTTAKTEKND) are enriched in basic and acidic residues. Residue Asn627 is glycosylated (N-linked (GlcNAc...) asparagine).

The protein localises to the endoplasmic reticulum membrane. In terms of biological role, plays an important role in regulating the size of autophagosomes during the formation process. The chain is DnaJ homolog subfamily C member 16 (DNAJC16) from Gallus gallus (Chicken).